The sequence spans 347 residues: Selenide, water dikinase (347 aa).

Sec17 is a catalytic residue. A non-standard amino acid (selenocysteine) is located at residue Sec17. ATP contacts are provided by residues Lys20 and 48–50 (TAD). Asp51 serves as a coordination point for Mg(2+). Residues Asp68, Asp91, and 139 to 141 (GHS) contribute to the ATP site. Asp91 provides a ligand contact to Mg(2+). Asp227 is a Mg(2+) binding site.

It belongs to the selenophosphate synthase 1 family. Class I subfamily. As to quaternary structure, homodimer. Mg(2+) is required as a cofactor.

It catalyses the reaction hydrogenselenide + ATP + H2O = selenophosphate + AMP + phosphate + 2 H(+). In terms of biological role, synthesizes selenophosphate from selenide and ATP. This chain is Selenide, water dikinase, found in Haemophilus influenzae (strain 86-028NP).